The chain runs to 78 residues: Large ribosomal subunit protein bL28 (78 aa).

Belongs to the bacterial ribosomal protein bL28 family.

This Histophilus somni (strain 129Pt) (Haemophilus somnus) protein is Large ribosomal subunit protein bL28.